The sequence spans 147 residues: Myosin regulatory light chain (147 aa).

Thr-1 carries the N-acetylthreonine modification. EF-hand domains are found at residues 2 to 37, 73 to 108, and 109 to 144; these read ASAD…LGKN, EQSK…LGDA, and LTSS…GYPL. Ca(2+)-binding residues include Asp-15, Asp-17, Asp-19, Lys-21, Glu-26, Asp-86, Asn-90, Thr-92, and Glu-97.

This chain is Myosin regulatory light chain, found in Physarum polycephalum (Slime mold).